The sequence spans 484 residues: Acetyl-coenzyme A carboxylase carboxyl transferase subunit beta, chloroplastic (484 aa).

The region spanning 223–484 is the CoA carboxyltransferase N-terminal domain; it reads LWIQCDNCYG…LHAFFPLNKN (262 aa). Residues Cys227, Cys230, Cys243, and Cys246 each contribute to the Zn(2+) site. A C4-type zinc finger spans residues 227 to 246; the sequence is CDNCYGLMYKKVKMNVCEQC.

It belongs to the AccD/PCCB family. Acetyl-CoA carboxylase is a heterohexamer composed of biotin carboxyl carrier protein, biotin carboxylase and 2 subunits each of ACCase subunit alpha and ACCase plastid-coded subunit beta (accD). The cofactor is Zn(2+).

It is found in the plastid. It localises to the chloroplast stroma. The enzyme catalyses N(6)-carboxybiotinyl-L-lysyl-[protein] + acetyl-CoA = N(6)-biotinyl-L-lysyl-[protein] + malonyl-CoA. Its pathway is lipid metabolism; malonyl-CoA biosynthesis; malonyl-CoA from acetyl-CoA: step 1/1. Its function is as follows. Component of the acetyl coenzyme A carboxylase (ACC) complex. Biotin carboxylase (BC) catalyzes the carboxylation of biotin on its carrier protein (BCCP) and then the CO(2) group is transferred by the transcarboxylase to acetyl-CoA to form malonyl-CoA. This is Acetyl-coenzyme A carboxylase carboxyl transferase subunit beta, chloroplastic from Crucihimalaya wallichii (Rock-cress).